The following is a 101-amino-acid chain: Protein Tat (101 aa).

The interaction with human CREBBP stretch occupies residues 1–24 (MEPVDPNLEPWKHPGSQPRTACTN). Positions 1–48 (MEPVDPNLEPWKHPGSQPRTACTNCYCKKCCFHCQVCFITKGLGISYG) are transactivation. Cys-22, Cys-25, and Cys-27 together coordinate Zn(2+). The segment at 22-37 (CTNCYCKKCCFHCQVC) is cysteine-rich. Lys-28 is modified (N6-acetyllysine; by host PCAF). Positions 30, 33, 34, and 37 each coordinate Zn(2+). The tract at residues 38 to 48 (FITKGLGISYG) is core. Positions 48-101 (GRKKRRQRQRAPDSSQNHQDSLSKQPSSQPRGDPTGPKESKKEVERETETDPLD) are disordered. Residues 49–57 (RKKRRQRQR) carry the Nuclear localization signal, RNA-binding (TAR), and protein transduction motif. The tract at residues 49–86 (RKKRRQRQRAPDSSQNHQDSLSKQPSSQPRGDPTGPKE) is interaction with the host capping enzyme RNGTT. Residues Lys-50 and Lys-51 each carry the N6-acetyllysine; by host EP300 and GCN5L2 modification. Asymmetric dimethylarginine; by host PRMT6 occurs at positions 52 and 53. Residues 59–77 (PDSSQNHQDSLSKQPSSQP) are compositionally biased toward polar residues. Residue Lys-71 forms a Glycyl lysine isopeptide (Lys-Gly) (interchain with G-Cter in ubiquitin) linkage. Residues 78–80 (RGD) carry the Cell attachment site motif. The span at 83 to 101 (GPKESKKEVERETETDPLD) shows a compositional bias: basic and acidic residues.

It belongs to the lentiviruses Tat family. Interacts with host CCNT1. Associates with the P-TEFb complex composed at least of Tat, P-TEFb (CDK9 and CCNT1), TAR RNA, RNA Pol II. Recruits the HATs CREBBP, TAF1/TFIID, EP300, PCAF and GCN5L2. Interacts with host KAT5/Tip60; this interaction targets the latter to degradation. Interacts with the host deacetylase SIRT1. Interacts with host capping enzyme RNGTT; this interaction stimulates RNGTT. Binds to host KDR, and to the host integrins ITGAV/ITGB3 and ITGA5/ITGB1. Interacts with host KPNB1/importin beta-1 without previous binding to KPNA1/importin alpha-1. Interacts with EIF2AK2. Interacts with host nucleosome assembly protein NAP1L1; this interaction may be required for the transport of Tat within the nucleus, since the two proteins interact at the nuclear rim. Interacts with host C1QBP/SF2P32; this interaction involves lysine-acetylated Tat. Interacts with the host chemokine receptors CCR2, CCR3 and CXCR4. Interacts with host DPP4/CD26; this interaction may trigger an anti-proliferative effect. Interacts with host LDLR. Interacts with the host extracellular matrix metalloproteinase MMP1. Interacts with host PRMT6; this interaction mediates Tat's methylation. Interacts with, and is ubiquitinated by MDM2/Hdm2. Interacts with host PSMC3 and HTATIP2. Interacts with STAB1; this interaction may overcome SATB1-mediated repression of IL2 and IL2RA (interleukin) in T cells by binding to the same domain than HDAC1. Interacts (when acetylated) with human CDK13, thereby increasing HIV-1 mRNA splicing and promoting the production of the doubly spliced HIV-1 protein Nef. Interacts with host TBP; this interaction modulates the activity of transcriptional pre-initiation complex. Interacts with host RELA. Interacts with host PLSCR1; this interaction negatively regulates Tat transactivation activity by altering its subcellular distribution. Asymmetrical arginine methylation by host PRMT6 seems to diminish the transactivation capacity of Tat and affects the interaction with host CCNT1. In terms of processing, acetylation by EP300, CREBBP, GCN5L2/GCN5 and PCAF regulates the transactivation activity of Tat. EP300-mediated acetylation of Lys-50 promotes dissociation of Tat from the TAR RNA through the competitive binding to PCAF's bromodomain. In addition, the non-acetylated Tat's N-terminus can also interact with PCAF. PCAF-mediated acetylation of Lys-28 enhances Tat's binding to CCNT1. Lys-50 is deacetylated by SIRT1. Post-translationally, polyubiquitination by host MDM2 does not target Tat to degradation, but activates its transactivation function and fosters interaction with CCNT1 and TAR RNA. Phosphorylated by EIF2AK2 on serine and threonine residues adjacent to the basic region important for TAR RNA binding and function. Phosphorylation of Tat by EIF2AK2 is dependent on the prior activation of EIF2AK2 by dsRNA.

Its subcellular location is the host nucleus. The protein resides in the host nucleolus. The protein localises to the host cytoplasm. It localises to the secreted. Transcriptional activator that increases RNA Pol II processivity, thereby increasing the level of full-length viral transcripts. Recognizes a hairpin structure at the 5'-LTR of the nascent viral mRNAs referred to as the transactivation responsive RNA element (TAR) and recruits the cyclin T1-CDK9 complex (P-TEFb complex) that will in turn hyperphosphorylate the RNA polymerase II to allow efficient elongation. The CDK9 component of P-TEFb and other Tat-activated kinases hyperphosphorylate the C-terminus of RNA Pol II that becomes stabilized and much more processive. Other factors such as HTATSF1/Tat-SF1, SUPT5H/SPT5, and HTATIP2 are also important for Tat's function. Besides its effect on RNA Pol II processivity, Tat induces chromatin remodeling of proviral genes by recruiting the histone acetyltransferases (HATs) CREBBP, EP300 and PCAF to the chromatin. This also contributes to the increase in proviral transcription rate, especially when the provirus integrates in transcriptionally silent region of the host genome. To ensure maximal activation of the LTR, Tat mediates nuclear translocation of NF-kappa-B by interacting with host RELA. Through its interaction with host TBP, Tat may also modulate transcription initiation. Tat can reactivate a latently infected cell by penetrating in it and transactivating its LTR promoter. In the cytoplasm, Tat is thought to act as a translational activator of HIV-1 mRNAs. In terms of biological role, extracellular circulating Tat can be endocytosed by surrounding uninfected cells via the binding to several surface receptors such as CD26, CXCR4, heparan sulfate proteoglycans (HSPG) or LDLR. Neurons are rarely infected, but they internalize Tat via their LDLR. Through its interaction with nuclear HATs, Tat is potentially able to control the acetylation-dependent cellular gene expression. Modulates the expression of many cellular genes involved in cell survival, proliferation or in coding for cytokines or cytokine receptors. Tat plays a role in T-cell and neurons apoptosis. Tat induced neurotoxicity and apoptosis probably contribute to neuroAIDS. Circulating Tat also acts as a chemokine-like and/or growth factor-like molecule that binds to specific receptors on the surface of the cells, affecting many cellular pathways. In the vascular system, Tat binds to ITGAV/ITGB3 and ITGA5/ITGB1 integrins dimers at the surface of endothelial cells and competes with bFGF for heparin-binding sites, leading to an excess of soluble bFGF. The chain is Protein Tat from Human immunodeficiency virus type 1 group M subtype B (isolate SF33) (HIV-1).